A 572-amino-acid chain; its full sequence is MNIKKLSLCIFFATTQVHAFTQWGAGGITPMGHEWLTRTSALEVLNAEHKTSVDPNDPRNTWTSGLAKNIDISTADDEVAKIKSHTNDNSLYAPRSDAVYSAIVGQRWVDLGGMNVANNLISQTGPDCFDAVSQEPADIQQDHFMRRYDDNGQQGGVKSAQRGQERFITHFINAAMATNKRIVVWDGGGSSAKTDVDYNYFLFGRAVHLFQDSFSPEHVVRSPSDNYEKVRQVKAYICTEGAEQHAHSTGAVLDYTSGDVIWKVGTKTDTGWGGYKASNMKPVALVAMEASKDLWAAFMRTMSVDINEREKYARNEAQVLIDKWMSFDKDEMEHWYDNENNRDNTYVKVDGDTGKGKLQKECMSGLSAKNRYGATIKPKTQKELVDVLDDSRRYCLFNIEAEPGYADANDPYLNIPFNWRWKSNSWLVPNASWQQKQLDRDTGKIIKIKEFTNNQELTVDSIENNYSIVTGAKKPLSLVRVPGDGGKSFYLRSKDNPYLFFSYSDKKNGRIKLWHSPNQAEFEILPGNNIFNLKNTYWNQYVWYDKNSKGAYLTEKGSPDNASSKWIISEEN.

Functionally, bacterial hemolysins are exotoxins that attack blood cell membranes and cause cell rupture by mechanisms not clearly defined. In Aeromonas salmonicida, this protein is Hemolysin-1 (ash1).